A 393-amino-acid chain; its full sequence is Anhydro-N-acetylmuramic acid kinase (393 aa).

9–16 (GTSADGVD) contacts ATP.

It belongs to the anhydro-N-acetylmuramic acid kinase family.

It carries out the reaction 1,6-anhydro-N-acetyl-beta-muramate + ATP + H2O = N-acetyl-D-muramate 6-phosphate + ADP + H(+). It functions in the pathway amino-sugar metabolism; 1,6-anhydro-N-acetylmuramate degradation. The protein operates within cell wall biogenesis; peptidoglycan recycling. Functionally, catalyzes the specific phosphorylation of 1,6-anhydro-N-acetylmuramic acid (anhMurNAc) with the simultaneous cleavage of the 1,6-anhydro ring, generating MurNAc-6-P. Is required for the utilization of anhMurNAc either imported from the medium or derived from its own cell wall murein, and thus plays a role in cell wall recycling. The protein is Anhydro-N-acetylmuramic acid kinase of Acidithiobacillus ferrooxidans (strain ATCC 23270 / DSM 14882 / CIP 104768 / NCIMB 8455) (Ferrobacillus ferrooxidans (strain ATCC 23270)).